Consider the following 185-residue polypeptide: Potassium-transporting ATPase KdpC subunit (185 aa).

Residues 14 to 34 (ALSLLTGVAYPLALTGIAAVI) form a helical membrane-spanning segment.

It belongs to the KdpC family. In terms of assembly, the system is composed of three essential subunits: KdpA, KdpB and KdpC.

It localises to the cell inner membrane. Its function is as follows. Part of the high-affinity ATP-driven potassium transport (or Kdp) system, which catalyzes the hydrolysis of ATP coupled with the electrogenic transport of potassium into the cytoplasm. This subunit acts as a catalytic chaperone that increases the ATP-binding affinity of the ATP-hydrolyzing subunit KdpB by the formation of a transient KdpB/KdpC/ATP ternary complex. The polypeptide is Potassium-transporting ATPase KdpC subunit (Cereibacter sphaeroides (strain ATCC 17023 / DSM 158 / JCM 6121 / CCUG 31486 / LMG 2827 / NBRC 12203 / NCIMB 8253 / ATH 2.4.1.) (Rhodobacter sphaeroides)).